A 462-amino-acid polypeptide reads, in one-letter code: L-seryl-tRNA(Sec) selenium transferase (462 aa).

Lysine 293 carries the post-translational modification N6-(pyridoxal phosphate)lysine.

This sequence belongs to the SelA family. Pyridoxal 5'-phosphate serves as cofactor.

It is found in the cytoplasm. The enzyme catalyses L-seryl-tRNA(Sec) + selenophosphate + H(+) = L-selenocysteinyl-tRNA(Sec) + phosphate. It participates in aminoacyl-tRNA biosynthesis; selenocysteinyl-tRNA(Sec) biosynthesis; selenocysteinyl-tRNA(Sec) from L-seryl-tRNA(Sec) (bacterial route): step 1/1. Its function is as follows. Converts seryl-tRNA(Sec) to selenocysteinyl-tRNA(Sec) required for selenoprotein biosynthesis. The polypeptide is L-seryl-tRNA(Sec) selenium transferase (Clostridium botulinum (strain Loch Maree / Type A3)).